A 528-amino-acid polypeptide reads, in one-letter code: D-3-phosphoglycerate dehydrogenase (528 aa).

Residues 151-152, aspartate 171, 230-232, and aspartate 256 each bind NAD(+); these read RI and AAR. The active site involves arginine 232. Residue glutamate 261 is part of the active site. Catalysis depends on histidine 279, which acts as the Proton donor. 279 to 282 provides a ligand contact to NAD(+); it reads HLGA. An ACT domain is found at 455–527; sequence NLIIHYVDRP…DAYKLEVVDL (73 aa).

It belongs to the D-isomer specific 2-hydroxyacid dehydrogenase family.

It catalyses the reaction (2R)-3-phosphoglycerate + NAD(+) = 3-phosphooxypyruvate + NADH + H(+). It carries out the reaction (R)-2-hydroxyglutarate + NAD(+) = 2-oxoglutarate + NADH + H(+). Its pathway is amino-acid biosynthesis; L-serine biosynthesis; L-serine from 3-phospho-D-glycerate: step 1/3. In terms of biological role, catalyzes the reversible oxidation of 3-phospho-D-glycerate to 3-phosphonooxypyruvate, the first step of the phosphorylated L-serine biosynthesis pathway. Also catalyzes the reversible oxidation of 2-hydroxyglutarate to 2-oxoglutarate. The protein is D-3-phosphoglycerate dehydrogenase (serA) of Mycobacterium bovis (strain ATCC BAA-935 / AF2122/97).